Here is a 302-residue protein sequence, read N- to C-terminus: UDP-N-acetylenolpyruvoylglucosamine reductase (302 aa).

The 166-residue stretch at 27-192 folds into the FAD-binding PCMH-type domain; sequence KVGGAVDYLA…LSAKFALRPG (166 aa). R171 is an active-site residue. The active-site Proton donor is S221. E291 is a catalytic residue.

The protein belongs to the MurB family. FAD serves as cofactor.

The protein resides in the cytoplasm. The enzyme catalyses UDP-N-acetyl-alpha-D-muramate + NADP(+) = UDP-N-acetyl-3-O-(1-carboxyvinyl)-alpha-D-glucosamine + NADPH + H(+). It participates in cell wall biogenesis; peptidoglycan biosynthesis. Functionally, cell wall formation. The protein is UDP-N-acetylenolpyruvoylglucosamine reductase of Streptococcus suis (strain 98HAH33).